We begin with the raw amino-acid sequence, 1571 residues long: Pentafunctional AROM polypeptide (1571 aa).

Residues 1 to 384 form a 3-dehydroquinate synthase region; that stretch reads MEQPTTIQIL…HEQKASVVSN (384 aa). Residues 44–46, 81–84, 114–116, and aspartate 119 each bind NAD(+); these read DTN, ESSK, and GGV. Arginine 130 contacts 7-phospho-2-dehydro-3-deoxy-D-arabino-heptonate. NAD(+) is bound at residue 139 to 140; that stretch reads TT. 2 residues coordinate 7-phospho-2-dehydro-3-deoxy-D-arabino-heptonate: aspartate 146 and lysine 152. Lysine 161 provides a ligand contact to NAD(+). Asparagine 162 contributes to the 7-phospho-2-dehydro-3-deoxy-D-arabino-heptonate binding site. Residues 179-182 and asparagine 190 each bind NAD(+); that span reads FLNT. Glutamate 194 contacts Zn(2+). 7-phospho-2-dehydro-3-deoxy-D-arabino-heptonate is bound by residues 194–197 and lysine 250; that span reads EVIK. Catalysis depends on glutamate 260, which acts as the Proton acceptor; for 3-dehydroquinate synthase activity. 7-phospho-2-dehydro-3-deoxy-D-arabino-heptonate contacts are provided by residues 264–268 and histidine 271; that span reads RNLLN. Histidine 271 provides a ligand contact to Zn(2+). The active-site Proton acceptor; for 3-dehydroquinate synthase activity is the histidine 275. Histidine 287 and lysine 356 together coordinate 7-phospho-2-dehydro-3-deoxy-D-arabino-heptonate. Histidine 287 provides a ligand contact to Zn(2+). The segment at 397-843 is EPSP synthase; it reads VLPGIPKPLN…WDALAQTFKV (447 aa). Catalysis depends on cysteine 825, which acts as the For EPSP synthase activity. The interval 866 to 1057 is shikimate kinase; that stretch reads ASIFIIGMRG…KKKDHSFFVS (192 aa). 872–879 contributes to the ATP binding site; sequence GMRGAGKT. A 3-dehydroquinase region spans residues 1058–1278; sequence LTLPDLQLSA…AAPGQVSAKD (221 aa). Histidine 1181 functions as the Proton acceptor; for 3-dehydroquinate dehydratase activity in the catalytic mechanism. The Schiff-base intermediate with substrate; for 3-dehydroquinate dehydratase activity role is filled by lysine 1209. Residues 1291-1571 are shikimate dehydrogenase; it reads AKKFALFGKP…EDARAAVMNI (281 aa).

This sequence in the N-terminal section; belongs to the sugar phosphate cyclases superfamily. Dehydroquinate synthase family. The protein in the 2nd section; belongs to the EPSP synthase family. In the 3rd section; belongs to the shikimate kinase family. It in the 4th section; belongs to the type-I 3-dehydroquinase family. This sequence in the C-terminal section; belongs to the shikimate dehydrogenase family. As to quaternary structure, homodimer. Requires Zn(2+) as cofactor.

It localises to the cytoplasm. It carries out the reaction 7-phospho-2-dehydro-3-deoxy-D-arabino-heptonate = 3-dehydroquinate + phosphate. The enzyme catalyses 3-dehydroquinate = 3-dehydroshikimate + H2O. The catalysed reaction is shikimate + NADP(+) = 3-dehydroshikimate + NADPH + H(+). It catalyses the reaction shikimate + ATP = 3-phosphoshikimate + ADP + H(+). It carries out the reaction 3-phosphoshikimate + phosphoenolpyruvate = 5-O-(1-carboxyvinyl)-3-phosphoshikimate + phosphate. It participates in metabolic intermediate biosynthesis; chorismate biosynthesis; chorismate from D-erythrose 4-phosphate and phosphoenolpyruvate: step 2/7. It functions in the pathway metabolic intermediate biosynthesis; chorismate biosynthesis; chorismate from D-erythrose 4-phosphate and phosphoenolpyruvate: step 3/7. The protein operates within metabolic intermediate biosynthesis; chorismate biosynthesis; chorismate from D-erythrose 4-phosphate and phosphoenolpyruvate: step 4/7. Its pathway is metabolic intermediate biosynthesis; chorismate biosynthesis; chorismate from D-erythrose 4-phosphate and phosphoenolpyruvate: step 5/7. It participates in metabolic intermediate biosynthesis; chorismate biosynthesis; chorismate from D-erythrose 4-phosphate and phosphoenolpyruvate: step 6/7. Its function is as follows. The AROM polypeptide catalyzes 5 consecutive enzymatic reactions in prechorismate polyaromatic amino acid biosynthesis. The chain is Pentafunctional AROM polypeptide from Arthroderma otae (strain ATCC MYA-4605 / CBS 113480) (Microsporum canis).